A 990-amino-acid polypeptide reads, in one-letter code: MYLTASSSASSSIIRAASSRSSSLFSFRSVLSPSVSSTSPSSLLARRSFGTISPAFRRWSHSFHSKPSPFRFTSQIRAVSPVLDRLQRTFSSMASEHPFKGIFTTLPKPGGGEFGKFYSLPALNDPRVDKLPYSIRILLESAIRNCDNFQVTKEDVEKIIDWEKTSPKQVEIPFKPARVLLQDFTGVPAVVDLACMRDAMNKLGSDSNKINPLVPVDLVIDHSVQVDVARSENAVQANMELEFQRNKERFAFLKWGSTAFQNMLVVPPGSGIVHQVNLEYLGRVVFNTKGLLYPDSVVGTDSHTTMIDGLGVAGWGVGGIEAEATMLGQPMSMVLPGVVGFKLAGKMRNGVTATDLVLTVTQMLRKHGVVGKFVEFYGNGMSGLSLADRATIANMSPEYGATMGFFPVDHVTLQYLKLTGRSDETVAMIEAYLRANNMFVDYNEPQQDRVYSSYLELNLDDVEPCISGPKRPHDRVTLKEMKADWHSCLDSKVGFKGFAIPKEAQEKVVNFSFDGQPAELKHGSVVIAAITSCTNTSNPSVMLGAGLVAKKACDLGLQVKPWIKTSLAPGSGVVTKYLLKSGLQEYLNEQGFNIVGYGCTTCIGNSGEINESVGAAITENDIVAAAVLSGNRNFEGRVHPLTRANYLASPPLVVAYALAGTVNIDFETEPIGKGKNGKDVFLRDIWPTTEEIAEVVQSSVLPDMFRATYESITKGNPMWNKLSVPENTLYSWDPNSTYIHEPPYFKDMTMDPPGPHNVKDAYCLLNFGDSITTDHISPAGNIQKDSPAAKFLMERGVDRKDFNSYGSRRGNDEIMARGTFANIRIVNKLMNGEVGPKTVHIPSGEKLSVFDAAMRYKSSGEDTIILAGAEYGSGSSRDWAAKGPMLQGVKAVIAKSFERIHRSNLVGMGIIPLCFKSGEDADTLGLTGHERYTIHLPTDISEIRPGQDVTVTTDNGKSFTCTVRFDTEVELAYFNHGGILPYVIRNLSKQ.

The transit peptide at 1–78 directs the protein to the mitochondrion; it reads MYLTASSSAS…PFRFTSQIRA (78 aa). At Ser-91 the chain carries Phosphoserine. Residues Gln-182 and 301–303 each bind substrate; that span reads DSH. [4Fe-4S] cluster is bound by residues Cys-533, Cys-599, and Cys-602. Residues Arg-632, Arg-637, Arg-795, and 876 to 877 contribute to the substrate site; that span reads SR.

It belongs to the aconitase/IPM isomerase family. In terms of assembly, monomer. Interacts with B'GAMMA in the cytosol. It depends on [4Fe-4S] cluster as a cofactor. Phosphorylated at Ser-91 in the cytoplasm; this phosphorylation requires the presence of B'GAMMA. Major aconitase isoenzyme in young seedlings. Expressed in roots, leaves, stems and flowers, and, at low levels, in seeds.

The protein resides in the mitochondrion. It localises to the cytoplasm. It carries out the reaction citrate = D-threo-isocitrate. It participates in carbohydrate metabolism; tricarboxylic acid cycle; isocitrate from oxaloacetate: step 2/2. Functionally, catalyzes the isomerization of citrate to isocitrate via cis-aconitate. Contributes to oxidative stress tolerance. Modulates cytosolic citrate metabolism during lipid mobilization. Required during seedling growth. This is Aconitate hydratase 3, mitochondrial from Arabidopsis thaliana (Mouse-ear cress).